A 437-amino-acid chain; its full sequence is Bile acid CoA-transferase BaiK (437 aa).

Aspartate 171 serves as the catalytic Nucleophile.

It belongs to the CoA-transferase III family.

It carries out the reaction deoxycholoyl-CoA + cholate = choloyl-CoA + deoxycholate. The catalysed reaction is allodeoxycholoyl-CoA + cholate = allodeoxycholate + choloyl-CoA. The enzyme catalyses allocholate + deoxycholoyl-CoA = allocholoyl-CoA + deoxycholate. It catalyses the reaction allocholate + allodeoxycholoyl-CoA = allocholoyl-CoA + allodeoxycholate. It carries out the reaction ursodeoxycholate + deoxycholoyl-CoA = ursodeoxycholoyl-CoA + deoxycholate. The catalysed reaction is allodeoxycholoyl-CoA + ursodeoxycholate = ursodeoxycholoyl-CoA + allodeoxycholate. Its pathway is lipid metabolism; bile acid biosynthesis. Its function is as follows. Functions in the bile acid 7alpha-dehydroxylation pathway, which forms secondary bile acids via the 7alpha-dehydroxylation of primary bile acids, and is carried out by intestinal anaerobic bacteria. Acts as a bile acid CoA transferase with broad bile acid substrate specificity. Catalyzes the transfer of the CoA moiety of secondary bile acid-CoA compounds to primary bile acids. Can use deoxycholoyl-CoA and allodeoxycholoyl-CoA as bile acid CoA donors and cholate, allocholate and ursodeoxycholate as bile acid CoA acceptors. Shows no activity when lithocholoyl-CoA is used as the CoA donor. This is Bile acid CoA-transferase BaiK from Clostridium scindens (strain JCM 10418 / VPI 12708).